Consider the following 327-residue polypeptide: Trypsin-like protease try-5 (327 aa).

An N-terminal signal peptide occupies residues 1-21 (MRPRIIVFLFQVLVVIKGTKL). One can recognise a Peptidase S1 domain in the interval 43-327 (AAGNTGNPTH…KFIVNFINQA (285 aa)). Cysteines 73 and 89 form a disulfide. Active-site charge relay system residues include H88 and D173. N207 is a glycosylation site (N-linked (GlcNAc...) asparagine). 2 cysteine pairs are disulfide-bonded: C242–C256 and C266–C296. Catalysis depends on S270, which acts as the Charge relay system.

This sequence belongs to the peptidase S1 family. In terms of tissue distribution, specifically expressed in the male gonad including the seminal vesicle, the valve region and the vas deferens.

It localises to the secreted. The protein localises to the cytoplasmic vesicle. The protein resides in the secretory vesicle lumen. With respect to regulation, in the male gonad, probably maintained inactive by swm-1. Serine protease which, in males, acts as a promoting signal during mating to activate sperm. This is Trypsin-like protease try-5 from Caenorhabditis elegans.